The primary structure comprises 59 residues: Large ribosomal subunit protein bL32 (59 aa).

The disordered stretch occupies residues 1 to 22 (MAVQQNKKSPSKRGMHRSHDFL).

The protein belongs to the bacterial ribosomal protein bL32 family.

This Thiobacillus denitrificans (strain ATCC 25259 / T1) protein is Large ribosomal subunit protein bL32.